Here is a 191-residue protein sequence, read N- to C-terminus: Cell division protein SepF (191 aa).

Positions 153 to 178 (FPEEASPSNVSSKKTSQYKFETNTTP) are enriched in polar residues. The interval 153–191 (FPEEASPSNVSSKKTSQYKFETNTTPEPAWGESKLSAYN) is disordered.

This sequence belongs to the SepF family. In terms of assembly, homodimer. Interacts with FtsZ.

The protein resides in the cytoplasm. Cell division protein that is part of the divisome complex and is recruited early to the Z-ring. Probably stimulates Z-ring formation, perhaps through the cross-linking of FtsZ protofilaments. Its function overlaps with FtsA. This Prochlorococcus marinus subsp. pastoris (strain CCMP1986 / NIES-2087 / MED4) protein is Cell division protein SepF.